Consider the following 437-residue polypeptide: Keratin, type I cytoskeletal 13 (437 aa).

The head stretch occupies residues 1 to 95 (MSCRFQSSSM…GVDGGLLSGN (95 aa)). Omega-N-methylarginine is present on residues R27 and R35. Residues 96–131 (EKITMQNLNDRLASYLDKVRALEAANADLEVKIRDW) are coil 1A. The region spanning 96-408 (EKITMQNLND…SLLEGQDAKM (313 aa)) is the IF rod domain. The interval 132–150 (HLKQSPASPERDYSAYYKT) is linker 1. The segment at 151–242 (IEELRIKILE…KNHEEEMKEF (92 aa)) is coil 1B. Residues 243 to 265 (SNQVVGQVNVEMDATPGIDLTRV) form a linker 12 region. The interval 266 to 404 (LAEMREQYEA…ATYRSLLEGQ (139 aa)) is coil 2. The tail stretch occupies residues 405 to 437 (DAKMTGFNSGGNNTTTSNGSPSSNSGRPDFRKY). The segment at 408-437 (MTGFNSGGNNTTTSNGSPSSNSGRPDFRKY) is disordered. The span at 409-430 (TGFNSGGNNTTTSNGSPSSNSG) shows a compositional bias: low complexity.

This sequence belongs to the intermediate filament family. Heterotetramer of two type I and two type II keratins. O-glycosylated; glycans consist of single N-acetylglucosamine residues. As to expression, expressed in tongue epithelia (at protein level). Expressed in upper suprabasal layers of the corneal epithelium (at protein level).

Functionally, type 1 keratin. Maintains postnatal tongue mucosal cell homeostasis and tissue organization in response to mechanical stress, potentially via regulation of the G1/S phase cyclins CCNE1 and CCNE2. The chain is Keratin, type I cytoskeletal 13 (Krt13) from Mus musculus (Mouse).